A 134-amino-acid polypeptide reads, in one-letter code: Profilin (134 aa).

It belongs to the profilin family. As to quaternary structure, interacts with host Tpm1. Interacts with protein A25.

The protein localises to the host cytoplasm. In terms of biological role, participates in either intracellular transport of viral proteins or intercellular spread of the virus. Cellular profilins modulate actin filament dynamics (polymerization and depolymerization) via direct binding to actin through an actin-binding domain as well as by modulation of other actin-binding proteins. In contrast to cellular homologs, the poxvirus profilins seem to bind actin only weakly. The sequence is that of Profilin from Ectromelia virus (strain Moscow) (ECTV).